Consider the following 206-residue polypeptide: MPFMPVPYVIEQTHRGERSYDIYSRLLKDRIVMLGTEIDDDVANVIVAQLLFLESEDPDKDINLYINSPGGSVTAGLAIYDTMQYVKCPVSTICVGQAASMGAVLLLAGAKGKRYALPSSRIMIHQPLGGVRGQATDIEIQAKEILRMKAKLNELIVKHTGQSIERVEKDTDRDYFMGASEAKAYGIIDEIQNPRKVVGLGKEEKK.

Serine 100 acts as the Nucleophile in catalysis. Residue histidine 125 is part of the active site.

This sequence belongs to the peptidase S14 family. As to quaternary structure, fourteen ClpP subunits assemble into 2 heptameric rings which stack back to back to give a disk-like structure with a central cavity, resembling the structure of eukaryotic proteasomes.

The protein resides in the cytoplasm. The catalysed reaction is Hydrolysis of proteins to small peptides in the presence of ATP and magnesium. alpha-casein is the usual test substrate. In the absence of ATP, only oligopeptides shorter than five residues are hydrolyzed (such as succinyl-Leu-Tyr-|-NHMec, and Leu-Tyr-Leu-|-Tyr-Trp, in which cleavage of the -Tyr-|-Leu- and -Tyr-|-Trp bonds also occurs).. In terms of biological role, cleaves peptides in various proteins in a process that requires ATP hydrolysis. Has a chymotrypsin-like activity. Plays a major role in the degradation of misfolded proteins. The protein is ATP-dependent Clp protease proteolytic subunit 1 of Myxococcus xanthus (strain DK1622).